The primary structure comprises 421 residues: Ankyrin repeat and SOCS box protein 6 (421 aa).

ANK repeat units follow at residues 67-97, 102-131, 136-166, 170-205, 226-255, and 260-289; these read EGVSNALLKMAELGLTRAADVLLRHGANLNF, TYYTALHIAVLRNQPDMVELLVHHGADVNR, HESSPLDLASEEPERLPCLQRLLDLGADVNA, HGKTALLHALASSDGVQIHNTENIRLLLEGGADVKA, GGDKEEAQMINRFCFQVTRLLLAHGADPSE, and ESLTHICLKSFKLHFPLLRFLLESGAAYNC. The SOCS box domain occupies 360 to 415; sequence ALHFSLRQLESYPPPLKHLCRVAIRLYLQPWPVDVKVKALPLPDRLKWYLLSEHSG.

It belongs to the ankyrin SOCS box (ASB) family. In terms of assembly, binds APS. Identified in a complex with ELOB and ELOC. Interacts with CUL5 and RNF7. Interacts with SQSTM1. Post-translationally, ubiquitinated by RNF41; leading to proteasomal degradation.

Its subcellular location is the cytoplasm. The protein operates within protein modification; protein ubiquitination. In terms of biological role, probable substrate-recognition component of a SCF-like ECS (Elongin-Cullin-SOCS-box protein) E3 ubiquitin-protein ligase complex which mediates the ubiquitination and subsequent proteasomal degradation of target proteins. May play a role in the regulation of cell proliferation and autophagy by promoting the ubiquitination and degradation of SQSTM1. This Homo sapiens (Human) protein is Ankyrin repeat and SOCS box protein 6 (ASB6).